The chain runs to 760 residues: NAD(P)H-quinone oxidoreductase subunit 5, chloroplastic (760 aa).

16 helical membrane passes run 9-29 (WIIS…LLLF), 39-59 (IWAF…IDLF), 89-109 (IDPL…LVLV), 125-145 (FVYM…SNLI), 147-167 (IYIF…FWFT), 185-205 (GDFG…SFEF), 221-241 (NEVH…GAIA), 260-280 (TPIS…FLVA), 282-302 (LLPL…IGII), 329-349 (LGYT…FHLI), 356-376 (ALLF…VGYS), 398-418 (IAFL…CFWS), 429-449 (YSPI…FYMF), 556-576 (ILFP…IGIP), 620-640 (FSVS…KPIY), and 734-754 (FYLL…SSIF).

This sequence belongs to the complex I subunit 5 family. NDH is composed of at least 16 different subunits, 5 of which are encoded in the nucleus.

The protein localises to the plastid. It localises to the chloroplast thylakoid membrane. It carries out the reaction a plastoquinone + NADH + (n+1) H(+)(in) = a plastoquinol + NAD(+) + n H(+)(out). The catalysed reaction is a plastoquinone + NADPH + (n+1) H(+)(in) = a plastoquinol + NADP(+) + n H(+)(out). In terms of biological role, NDH shuttles electrons from NAD(P)H:plastoquinone, via FMN and iron-sulfur (Fe-S) centers, to quinones in the photosynthetic chain and possibly in a chloroplast respiratory chain. The immediate electron acceptor for the enzyme in this species is believed to be plastoquinone. Couples the redox reaction to proton translocation, and thus conserves the redox energy in a proton gradient. In Populus trichocarpa (Western balsam poplar), this protein is NAD(P)H-quinone oxidoreductase subunit 5, chloroplastic (ndhF).